Here is a 268-residue protein sequence, read N- to C-terminus: Protein MGF 300-1L (268 aa).

The Cytoplasmic portion of the chain corresponds to 1 to 175 (MVSLTTCCLK…QTFKTFYAKN (175 aa)). Residues 176 to 193 (YSLSTLYCIFLAIYYKLY) form a helical membrane-spanning segment. Over 194 to 268 (TALRKMVKIY…MYAFSQNDYW (75 aa)) the chain is Extracellular. A glycan (N-linked (GlcNAc...) asparagine; by host) is linked at asparagine 227.

This sequence belongs to the asfivirus MGF 300 family.

Its subcellular location is the host membrane. Functionally, plays a role in virus cell tropism, and may be required for efficient virus replication in macrophages. The chain is Protein MGF 300-1L from African swine fever virus (strain Badajoz 1971 Vero-adapted) (Ba71V).